Reading from the N-terminus, the 284-residue chain is RNase adapter protein RapZ (284 aa).

ATP is bound at residue glycine 8–serine 15. Residue aspartate 56 to asparagine 59 participates in GTP binding. The segment at arginine 266 to threonine 284 is RNA-binding.

The protein belongs to the RapZ-like family. RapZ subfamily. In terms of assembly, homotrimer.

Its function is as follows. Modulates the synthesis of GlmS, by affecting the processing and stability of the regulatory small RNA GlmZ. When glucosamine-6-phosphate (GlcN6P) concentrations are high in the cell, RapZ binds GlmZ and targets it to cleavage by RNase E. Consequently, GlmZ is inactivated and unable to activate GlmS synthesis. Under low GlcN6P concentrations, RapZ is sequestered and inactivated by an other regulatory small RNA, GlmY, preventing GlmZ degradation and leading to synthesis of GlmS. This chain is RNase adapter protein RapZ, found in Escherichia fergusonii (strain ATCC 35469 / DSM 13698 / CCUG 18766 / IAM 14443 / JCM 21226 / LMG 7866 / NBRC 102419 / NCTC 12128 / CDC 0568-73).